The following is a 244-amino-acid chain: Transcriptional activator protein FnrA (244 aa).

The region spanning 159–232 is the HTH crp-type domain; it reads KTADERIATF…GKEVRILDSI (74 aa). The H-T-H motif DNA-binding region spans 192-211; sequence RNEIGNYLGLAVETVSRVFT.

In terms of biological role, transcriptional regulator of arginine deiminase. This Stutzerimonas stutzeri (Pseudomonas stutzeri) protein is Transcriptional activator protein FnrA (fnrA).